The chain runs to 99 residues: Small ribosomal subunit protein uS14m (99 aa).

This sequence belongs to the universal ribosomal protein uS14 family.

The protein resides in the mitochondrion. This Prototheca wickerhamii protein is Small ribosomal subunit protein uS14m (RPS14).